The chain runs to 247 residues: Neurotrophic factor BDNF precursor form (247 aa).

Positions 1-18 are cleaved as a signal peptide; the sequence is MTILFLTMVISYFGCMKA. The propeptide occupies 19–128; that stretch reads APMKEANARG…AANMSMRVRR (110 aa). N-linked (GlcNAc...) asparagine glycosylation is present at asparagine 121. Cystine bridges form between cysteine 141-cysteine 208, cysteine 186-cysteine 237, and cysteine 196-cysteine 239.

The protein belongs to the NGF-beta family. Monomers and homodimers. Binds to NTRK2/TRKB. Can form heterodimers with other neurotrophin family members, such as NTF3 and NTF4 (in vitro), but the physiological relevance of this is not clear. BDNF precursor form: interacts with the heterodimer formed by NGFR and SORCS2. Mature BDNF has much lower affinity for the heterodimer formed by NGFR and SORCS2. N-glycosylated and glycosulfated, contrary to mature BDNF. Post-translationally, mature BDNF is produced by proteolytic removal of the propeptide, catalyzed by a FURIN family member. In addition, the precursor form is proteolytically cleaved within the propeptide, but this is not an obligatory intermediate for the production of mature BDNF. Can be converted into mature BDNF by plasmin (PLG).

The protein resides in the secreted. Functionally, important signaling molecule that activates signaling cascades downstream of NTRK2. During development, promotes the survival and differentiation of selected neuronal populations of the peripheral and central nervous systems. Participates in axonal growth, pathfinding and in the modulation of dendritic growth and morphology. Major regulator of synaptic transmission and plasticity at adult synapses in many regions of the CNS. The versatility of BDNF is emphasized by its contribution to a range of adaptive neuronal responses including long-term potentiation (LTP), long-term depression (LTD), certain forms of short-term synaptic plasticity, as well as homeostatic regulation of intrinsic neuronal excitability. Important signaling molecule that activates signaling cascades downstream of NTRK2. Activates signaling cascades via the heterodimeric receptor formed by NGFR and SORCS2. Signaling via NGFR and SORCS2 plays a role in synaptic plasticity and long-term depression (LTD). Binding to NGFR and SORCS2 promotes neuronal apoptosis. Promotes neuronal growth cone collapse. In Equus caballus (Horse), this protein is Neurotrophic factor BDNF precursor form (BDNF).